The primary structure comprises 389 residues: Chitinase-3-like protein 1 (389 aa).

Positions 1 to 29 (MHTSTEARMGMRAALTGFAVLMLLQSCSA) are cleaved as a signal peptide. Residues 30 to 389 (YKLVCYFTSW…LTNAIKDALA (360 aa)) form the GH18 domain. An intrachain disulfide couples cysteine 34 to cysteine 59. Residue asparagine 68 is glycosylated (N-linked (GlcNAc...) asparagine). Chitin contacts are provided by residues 79-80 (EW), 106-109 (GGWK), tyrosine 150, and 213-216 (MTYD). Cysteine 309 and cysteine 372 are joined by a disulfide. The important for AKT1 activation and IL8 production stretch occupies residues 333–347 (QWVGYEDKESVKNKV). Tryptophan 361 contributes to the chitin binding site.

It belongs to the glycosyl hydrolase 18 family. Monomer. In terms of tissue distribution, detected in lung in pulmonary macrophages and alveolar type 2 cells and in bronchoalveolar lavage (BAL) fluids. Expressed in mammary tumor cells (at protein level). Expressed in lung. Not detected in non-inflammatory colon.

It is found in the secreted. Its subcellular location is the extracellular space. The protein localises to the cytoplasm. The protein resides in the endoplasmic reticulum. Carbohydrate-binding lectin with a preference for chitin. Has no chitinase activity. May play a role in tissue remodeling and in the capacity of cells to respond to and cope with changes in their environment. Plays a role in T-helper cell type 2 (Th2) inflammatory response and IL-13-induced inflammation, regulating allergen sensitization, inflammatory cell apoptosis, dendritic cell accumulation and M2 macrophage differentiation. Facilitates invasion of pathogenic enteric bacteria into colonic mucosa and lymphoid organs. Mediates activation of AKT1 signaling pathway and subsequent IL8 production in colonic epithelial cells. Regulates antibacterial responses in lung by contributing to macrophage bacterial killing, controlling bacterial dissemination and augmenting host tolerance. Also regulates hyperoxia-induced injury, inflammation and epithelial apoptosis in lung. This Mus musculus (Mouse) protein is Chitinase-3-like protein 1 (Chi3l1).